The primary structure comprises 433 residues: Evolutionarily conserved signaling intermediate in Toll pathway, mitochondrial (433 aa).

The transit peptide at 1–48 (MSWAQAILLARGASRGWGGICSTALTGAPFSQVPPQAPRGLRCSAAAH) directs the protein to the mitochondrion. Residues 36–63 (QAPRGLRCSAAAHNPDSSLVPHPPEPPR) are disordered. A Glycyl lysine isopeptide (Lys-Gly) (interchain with G-Cter in ubiquitin) cross-link involves residue lysine 372. The tract at residues 397–433 (SGELLPSSSELEEPPPPPPEGQEEEEDSQQRQQQGQS) is disordered.

It belongs to the ECSIT family. In terms of assembly, interacts with MAP3K1, SMAD4 and TRAF6. Interacts with SMAD1 only after BMP4-treatment. Part of the mitochondrial complex I assembly/MCIA complex that comprises at least the core subunits TMEM126B, NDUFAF1, ECSIT and ACAD9 and complement subunits such as COA1 and TMEM186. Interacts with NDUFAF1. Interacts with ACAD9. Interacts with TRIM59. Interacts with TMEM70 and TMEM242. Interacts (when ubiquitinated) with NF-kappa-B subunits RELA and NFKB1. Interacts with RIGI, IFIT1 and MAVS; these interactions promote RLR-mediated type I IFN induction. Interacts with SQSTM1; this interaction inhibits TLR4 signaling via functional regulation of the TRAF6-ECSIT complex. Interacts with cereblon/CRBN; this interaction inhibits the ubiquitination of ECSIT. Post-translationally, ubiquitinated on Lys-372; leading to translocation in the nucleus together with RELA and NFKB1 and expression of NF-kappa-B-dependent genes.

Its subcellular location is the cytoplasm. It is found in the nucleus. The protein localises to the mitochondrion. Adapter protein that plays a role in different signaling pathways including TLRs and IL-1 pathways or innate antiviral induction signaling. Plays a role in the activation of NF-kappa-B by forming a signal complex with TRAF6 and TAK1/MAP3K7 to activate TAK1/MAP3K7 leading to activation of IKKs. Once ubiquitinated, interacts with the dissociated RELA and NFKB1 proteins and translocates to the nucleus where it induces NF-kappa-B-dependent gene expression. Plays a role in innate antiviral immune response by bridging the pattern recognition receptors RIGI and MDA5/IFIT1 to the MAVS complex at the mitochondrion. Promotes proteolytic activation of MAP3K1. Involved in the BMP signaling pathway. Required for normal embryonic development. In terms of biological role, as part of the MCIA complex, involved in the assembly of the mitochondrial complex I. This chain is Evolutionarily conserved signaling intermediate in Toll pathway, mitochondrial, found in Bos taurus (Bovine).